The primary structure comprises 504 residues: E3 ubiquitin-protein ligase dbl4 (504 aa).

The segment at 127–338 (HEGTCEICYD…NNWYTCNRYE (212 aa)) is TRIAD supradomain. Positions 131, 134, 147, 149, 152, 155, 173, 178, 217, 222, 244, 246, 251, 254, 259, 264, 291, and 294 each coordinate Zn(2+). The segment at 131–178 (CEICYDEGCLPFFSAECDHEFCLACYRQYLDSRISEGESVIQCPEESC) adopts an RING-type 1 zinc-finger fold. Residues 197 to 264 (DRYHRLLDRS…GHDNHQPTIC (68 aa)) form an IBR-type zinc finger. The RING-type 2; atypical zinc finger occupies 291–320 (CPKCSTTIEKNGGCNHMTCKKCKYEFCWVC). C304 is a catalytic residue. The Zn(2+) site is built by C309, C312, C317, C320, H327, and C334.

Belongs to the RBR family.

The protein localises to the cytoplasm. The protein resides in the nucleus. The catalysed reaction is [E2 ubiquitin-conjugating enzyme]-S-ubiquitinyl-L-cysteine + [acceptor protein]-L-lysine = [E2 ubiquitin-conjugating enzyme]-L-cysteine + [acceptor protein]-N(6)-ubiquitinyl-L-lysine.. Its pathway is protein modification; protein ubiquitination. Probable ubiquitin-protein ligase involved in the degradation-related ubiquitination of histones. Contributes to the post-translational regulation of histone protein levels by polyubiquitination of excess histones for subsequent degradation. This is E3 ubiquitin-protein ligase dbl4 from Schizosaccharomyces pombe (strain 972 / ATCC 24843) (Fission yeast).